The chain runs to 401 residues: NADH-quinone oxidoreductase subunit D 2 (401 aa).

It belongs to the complex I 49 kDa subunit family. As to quaternary structure, NDH-1 is composed of 14 different subunits. Subunits NuoB, C, D, E, F, and G constitute the peripheral sector of the complex.

Its subcellular location is the cell inner membrane. The enzyme catalyses a quinone + NADH + 5 H(+)(in) = a quinol + NAD(+) + 4 H(+)(out). NDH-1 shuttles electrons from NADH, via FMN and iron-sulfur (Fe-S) centers, to quinones in the respiratory chain. The immediate electron acceptor for the enzyme in this species is believed to be ubiquinone. Couples the redox reaction to proton translocation (for every two electrons transferred, four hydrogen ions are translocated across the cytoplasmic membrane), and thus conserves the redox energy in a proton gradient. The chain is NADH-quinone oxidoreductase subunit D 2 from Thermodesulfovibrio yellowstonii (strain ATCC 51303 / DSM 11347 / YP87).